Consider the following 646-residue polypeptide: MAPSADPGMVRMALLLLPPLWLLPLTGGSQRAEPMFTAVTNSVLPPDYDSNPTQLNYGVAVTDVDHDGDFEIVVAGYTGPNLVLKYNRAQNRLVNIAVDERSSPYYALRDRQGNAIGVTACDIDGDGREEIYFLNTNNAFSGVATYTDKLFKFRNNRWEDILSDDVNVARGVASLFAGRSVACVDRTGSGRYSIYIANYAYGDVGPDALIEMDPEASDLSRGILALRDVAAEAGVSKYTAGRGVSVGPILSSSASDIFCDNENGPNFLFHNQGNGTFVDTAASAGVDDPHQHGRGVALADFNRDGKVDIVYGNWNGPHRLYLQMSAHGKVRFRDIASPKFSTPSPVRTVIAADFDNDQELEVFFNNIAYRSSSANRLFRVIRREHGDPLIEELNPGDALEPEGRGTGGVVTDFDGDGMLDLILSHGESMAQPLSVFRGNQGFSNNWLRVVPRTRFGAFARGAKVVLYTKKSGAHLRIIDGGSGYLCEMEPVAHFGLGRDEASSVEVTWPDGKMVSRSVASEEMNSVLEILYPQDEDKLQNTAPLECGQGFSQQDNGHCMDTNECIQFPFVCPRDKPVCVNTYGSYRCRTNKRCNRGYEPNEDGTACVAQVAFLGGYSSAAFRLSEPLSQASYLSLGLGLCLQLYAL.

The first 28 residues, 1–28 (MAPSADPGMVRMALLLLPPLWLLPLTGG), serve as a signal peptide directing secretion. An FG-GAP 1; atypical repeat occupies 47–89 (DYDSNPTQLNYGVAVTDVDHDGDFEIVVAGYTGPNLVLKYNRA). One copy of the FG-GAP 2; atypical repeat lies at 106–148 (YALRDRQGNAIGVTACDIDGDGREEIYFLNTNNAFSGVATYTD). An FG-GAP 3; atypical repeat occupies 284 to 334 (AGVDDPHQHGRGVALADFNRDGKVDIVYGNWNGPHRLYLQMSAHGKVRFRD). One copy of the FG-GAP 4; atypical repeat lies at 396 to 438 (GDALEPEGRGTGGVVTDFDGDGMLDLILSHGESMAQPLSVFRG). The EGF-like domain maps to 560 to 606 (DTNECIQFPFVCPRDKPVCVNTYGSYRCRTNKRCNRGYEPNEDGTAC). Disulfide bonds link cysteine 564–cysteine 578, cysteine 571–cysteine 587, and cysteine 593–cysteine 606.

It is found in the secreted. Its subcellular location is the extracellular space. It localises to the extracellular matrix. This chain is Cartilage acidic protein 1 (Crtac1), found in Mus musculus (Mouse).